A 391-amino-acid chain; its full sequence is 3-ketoacyl-CoA thiolase (391 aa).

Cys-95 serves as the catalytic Acyl-thioester intermediate. Residues His-347 and Cys-377 each act as proton acceptor in the active site.

It belongs to the thiolase-like superfamily. Thiolase family. As to quaternary structure, heterotetramer of two alpha chains (FadB) and two beta chains (FadA).

It localises to the cytoplasm. The enzyme catalyses an acyl-CoA + acetyl-CoA = a 3-oxoacyl-CoA + CoA. It participates in lipid metabolism; fatty acid beta-oxidation. Its function is as follows. Catalyzes the final step of fatty acid oxidation in which acetyl-CoA is released and the CoA ester of a fatty acid two carbons shorter is formed. This is 3-ketoacyl-CoA thiolase from Pseudomonas aeruginosa (strain ATCC 15692 / DSM 22644 / CIP 104116 / JCM 14847 / LMG 12228 / 1C / PRS 101 / PAO1).